The following is a 270-amino-acid chain: GTP cyclohydrolase FolE2 2 (270 aa).

The protein belongs to the GTP cyclohydrolase IV family.

The enzyme catalyses GTP + H2O = 7,8-dihydroneopterin 3'-triphosphate + formate + H(+). It functions in the pathway cofactor biosynthesis; 7,8-dihydroneopterin triphosphate biosynthesis; 7,8-dihydroneopterin triphosphate from GTP: step 1/1. Converts GTP to 7,8-dihydroneopterin triphosphate. This is GTP cyclohydrolase FolE2 2 from Dechloromonas aromatica (strain RCB).